A 190-amino-acid chain; its full sequence is UPF0398 protein LAR_0869 (190 aa).

Belongs to the UPF0398 family.

The protein is UPF0398 protein LAR_0869 of Limosilactobacillus reuteri subsp. reuteri (strain JCM 1112) (Lactobacillus reuteri).